The chain runs to 431 residues: Serine/threonine-protein kinase Sgk1 (431 aa).

Residues 1–60 (MTVKTEAARDTLTYSRMRGMVAILIAFMKQRRMGLNDFIQKIANNSYACKHPEVQSILKI) are necessary for localization to the mitochondria. A disordered region spans residues 64 to 92 (QEPELMNANPSPPPSPSQQINLGPSSNPH). At Ser74 the chain carries Phosphoserine. Ser78 carries the phosphoserine; by MAPK7 modification. Residues 81-91 (QQINLGPSSNP) show a composition bias toward polar residues. One can recognise a Protein kinase domain in the interval 98–355 (FHFLKVIGKG…FMEIKNHVFF (258 aa)). ATP-binding positions include 104-112 (IGKGSFGKV) and Lys127. Positions 131-141 (KKAILKKKEEK) match the Nuclear localization signal motif. Asp222 functions as the Proton acceptor in the catalytic mechanism. Thr256 is modified (phosphothreonine; by PDPK1). Residues 356-431 (SLINWEDLIN…SYAPPMDSFL (76 aa)) enclose the AGC-kinase C-terminal domain. The residue at position 369 (Thr369) is a Phosphothreonine; by PKA. Residues Ser397, Ser401, and Ser422 each carry the phosphoserine modification.

The protein belongs to the protein kinase superfamily. AGC Ser/Thr protein kinase family. Homodimer; disulfide-linked. Forms a trimeric complex with FBXW7 and NOTCH1. Interacts with MAPK3/ERK1, MAPK1/ERK2, MAP2K1/MEK1, MAP2K2/MEK2, NEDD4, NEDD4L, MAPT/TAU, MAPK7, CREB1, SLC9A3R2/NHERF2 and KCNJ1/ROMK1. Associates with the mammalian target of rapamycin complex 2 (mTORC2) via an interaction with MAPKAP1/SIN1. In terms of processing, regulated by phosphorylation. Activated by phosphorylation on Ser-422 by mTORC2, transforming it into a substrate for PDPK1 which phosphorylates it on Thr-256. Phosphorylation on Ser-397 and Ser-401 are also essential for its activity. Phosphorylation on Ser-78 by MAPK7 is required for growth factor-induced cell cycle progression. Post-translationally, ubiquitinated by NEDD4L; which promotes proteasomal degradation. Ubiquitinated by SYVN1 at the endoplasmic reticulum; which promotes rapid proteasomal degradation and maintains a high turnover rate in resting cells.

It is found in the cytoplasm. It localises to the nucleus. Its subcellular location is the endoplasmic reticulum membrane. The protein resides in the cell membrane. The protein localises to the mitochondrion. It catalyses the reaction L-seryl-[protein] + ATP = O-phospho-L-seryl-[protein] + ADP + H(+). The catalysed reaction is L-threonyl-[protein] + ATP = O-phospho-L-threonyl-[protein] + ADP + H(+). Its activity is regulated as follows. Two specific sites, one in the kinase domain (Thr-256) and the other in the C-terminal regulatory region (Ser-422), need to be phosphorylated for its full activation. Phosphorylation at Ser-397 and Ser-401 are also essential for its activity. Activated by WNK1, WNK2, WNK3 and WNK4; which promote phosphorylation by mTORC2. Serine/threonine-protein kinase which is involved in the regulation of a wide variety of ion channels, membrane transporters, cellular enzymes, transcription factors, neuronal excitability, cell growth, proliferation, survival, migration and apoptosis. Plays an important role in cellular stress response. Contributes to regulation of renal Na(+) retention, renal K(+) elimination, salt appetite, gastric acid secretion, intestinal Na(+)/H(+) exchange and nutrient transport, insulin-dependent salt sensitivity of blood pressure, salt sensitivity of peripheral glucose uptake, cardiac repolarization and memory consolidation. Up-regulates Na(+) channels: SCNN1A/ENAC, SCN5A and ASIC1/ACCN2, K(+) channels: KCNJ1/ROMK1, KCNA1-5, KCNQ1-5 and KCNE1, epithelial Ca(2+) channels: TRPV5 and TRPV6, chloride channels: BSND, CLCN2 and CFTR, glutamate transporters: SLC1A3/EAAT1, SLC1A2 /EAAT2, SLC1A1/EAAT3, SLC1A6/EAAT4 and SLC1A7/EAAT5, amino acid transporters: SLC1A5/ASCT2, SLC38A1/SN1 and SLC6A19, creatine transporter: SLC6A8, Na(+)/dicarboxylate cotransporter: SLC13A2/NADC1, Na(+)-dependent phosphate cotransporter: SLC34A2/NAPI-2B, glutamate receptor: GRIK2/GLUR6. Up-regulates carriers: SLC9A3/NHE3, SLC12A1/NKCC2, SLC12A3/NCC, SLC5A3/SMIT, SLC2A1/GLUT1, SLC5A1/SGLT1 and SLC15A2/PEPT2. Regulates enzymes: GSK3A/B, PMM2 and Na(+)/K(+) ATPase, and transcription factors: CTNNB1 and nuclear factor NF-kappa-B. Stimulates sodium transport into epithelial cells by enhancing the stability and expression of SCNN1A/ENAC. This is achieved by phosphorylating the NEDD4L ubiquitin E3 ligase, promoting its interaction with 14-3-3 proteins, thereby preventing it from binding to SCNN1A/ENAC and targeting it for degradation. Regulates store-operated Ca(+2) entry (SOCE) by stimulating ORAI1 and STIM1. Regulates KCNJ1/ROMK1 directly via its phosphorylation or indirectly via increased interaction with SLC9A3R2/NHERF2. Phosphorylates MDM2 and activates MDM2-dependent ubiquitination of p53/TP53. Phosphorylates MAPT/TAU and mediates microtubule depolymerization and neurite formation in hippocampal neurons. Phosphorylates SLC2A4/GLUT4 and up-regulates its activity. Phosphorylates APBB1/FE65 and promotes its localization to the nucleus. Phosphorylates MAPK1/ERK2 and activates it by enhancing its interaction with MAP2K1/MEK1 and MAP2K2/MEK2. Phosphorylates FBXW7 and plays an inhibitory role in the NOTCH1 signaling. Phosphorylates FOXO1 resulting in its relocalization from the nucleus to the cytoplasm. Phosphorylates FOXO3, promoting its exit from the nucleus and interference with FOXO3-dependent transcription. Phosphorylates BRAF and MAP3K3/MEKK3 and inhibits their activity. Phosphorylates SLC9A3/NHE3 in response to dexamethasone, resulting in its activation and increased localization at the cell membrane. Phosphorylates CREB1. Necessary for vascular remodeling during angiogenesis. In Bos taurus (Bovine), this protein is Serine/threonine-protein kinase Sgk1 (SGK1).